The primary structure comprises 71 residues: UPF0337 protein PPA1427 (71 aa).

The segment at 20-46 (EKIGGLTDDSDLKSAGADQKASGKVAQ) is disordered.

Belongs to the UPF0337 (CsbD) family.

This chain is UPF0337 protein PPA1427, found in Cutibacterium acnes (strain DSM 16379 / KPA171202) (Propionibacterium acnes).